Here is a 179-residue protein sequence, read N- to C-terminus: Large ribosomal subunit protein uL5 (179 aa).

It belongs to the universal ribosomal protein uL5 family. Part of the 50S ribosomal subunit; part of the 5S rRNA/L5/L18/L25 subcomplex. Contacts the 5S rRNA and the P site tRNA. Forms a bridge to the 30S subunit in the 70S ribosome.

In terms of biological role, this is one of the proteins that bind and probably mediate the attachment of the 5S RNA into the large ribosomal subunit, where it forms part of the central protuberance. In the 70S ribosome it contacts protein S13 of the 30S subunit (bridge B1b), connecting the 2 subunits; this bridge is implicated in subunit movement. Contacts the P site tRNA; the 5S rRNA and some of its associated proteins might help stabilize positioning of ribosome-bound tRNAs. This chain is Large ribosomal subunit protein uL5, found in Vesicomyosocius okutanii subsp. Calyptogena okutanii (strain HA).